Consider the following 267-residue polypeptide: Indole-3-glycerol phosphate synthase (267 aa).

This sequence belongs to the TrpC family.

The catalysed reaction is 1-(2-carboxyphenylamino)-1-deoxy-D-ribulose 5-phosphate + H(+) = (1S,2R)-1-C-(indol-3-yl)glycerol 3-phosphate + CO2 + H2O. Its pathway is amino-acid biosynthesis; L-tryptophan biosynthesis; L-tryptophan from chorismate: step 4/5. In Cupriavidus necator (strain ATCC 17699 / DSM 428 / KCTC 22496 / NCIMB 10442 / H16 / Stanier 337) (Ralstonia eutropha), this protein is Indole-3-glycerol phosphate synthase.